The following is a 93-amino-acid chain: uncharacterized protein (93 aa).

Transmembrane regions (helical) follow at residues 8–28 (FIGIVKDILVLIASFGILLAS) and 54–74 (ACFLIFIALGETLLAFVYLIL).

Its subcellular location is the cell membrane. This is an uncharacterized protein from Methanocaldococcus jannaschii (strain ATCC 43067 / DSM 2661 / JAL-1 / JCM 10045 / NBRC 100440) (Methanococcus jannaschii).